The sequence spans 395 residues: Nucleoside diphosphate kinase homolog 7 (395 aa).

Positions 22–110 constitute a DM10 domain; it reads QSERFAFIAE…YTARQLGSRK (89 aa).

Belongs to the NDK family. As to quaternary structure, component of sperm flagellar doublet microtubules. Component of the gamma-tubulin ring complex. Widely expressed. Expressed in the flagellum of epididymal sperm but not in testicular sperm (at protein level).

It is found in the cytoplasm. The protein localises to the cytoskeleton. Its subcellular location is the microtubule organizing center. It localises to the centrosome. The protein resides in the nucleus. It is found in the spindle. The protein localises to the cilium axoneme. Its subcellular location is the flagellum axoneme. It localises to the cell projection. The protein resides in the cilium. In terms of biological role, possesses an intrinsic kinase activity. Displays 3'-5' exonuclease activity with a preference for single-stranded DNA. Does not seem to have nucleoside diphosphate kinase activity. Functional component of the gamma-tubulin ring complex, implicated in the regulation of the microtubule-nucleating activity of the gamma-tubulin ring complex in centrosomes, in a kinase activity-dependent manner. Part of the dynein-decorated doublet microtubules (DMTs) in cilia axoneme, which is required for motile cilia beating. The polypeptide is Nucleoside diphosphate kinase homolog 7 (Nme7) (Rattus norvegicus (Rat)).